The primary structure comprises 529 residues: Cytochrome P450 monooxygenase patI (529 aa).

The Cytoplasmic segment spans residues 1-8; the sequence is MDFTQVPP. Residues 9-25 traverse the membrane as a helical segment; it reads SYILGVLLSSTSILFCL. Residues 26–529 lie on the Lumenal side of the membrane; that stretch reads KYLLRSGYRP…EAQGVFSRFD (504 aa). N-linked (GlcNAc...) asparagine glycosylation is found at Asn-81 and Asn-383. Cys-449 provides a ligand contact to heme.

Belongs to the cytochrome P450 family. The cofactor is heme.

The protein localises to the endoplasmic reticulum membrane. The enzyme catalyses 3-hydroxybenzyl alcohol + reduced [NADPH--hemoprotein reductase] + O2 = gentisyl alcohol + oxidized [NADPH--hemoprotein reductase] + H2O + H(+). Its pathway is mycotoxin biosynthesis; patulin biosynthesis. Cytochrome P450 monooxygenase; part of the gene cluster that mediates the biosynthesis of patulin, an acetate-derived tetraketide mycotoxin produced by several fungal species that shows antimicrobial properties against several bacteria. PatI catalyzes the conversion of m-hydroxybenzyl alcohol into gentisyl alcohol. The pathway begins with the synthesis of 6-methylsalicylic acid by the polyketide synthase (PKS) patK via condensation of acetate and malonate units. The 6-methylsalicylic acid decarboxylase patG then catalyzes the decarboxylation of 6-methylsalicylic acid to yield m-cresol (also known as 3-methylphenol). These first reactions occur in the cytosol. The intermediate m-cresol is then transported into the endoplasmic reticulum where the cytochrome P450 monooxygenase patH converts it to m-hydroxybenzyl alcohol, which is further converted to gentisyl alcohol by the cytochrome P450 monooxygenase patI. The oxidoreductases patJ and patO further convert gentisyl alcohol to isoepoxydon in the vacuole. PatN catalyzes then the transformation of isoepoxydon into phyllostine. The cluster protein patF is responsible for the conversion from phyllostine to neopatulin whereas the alcohol dehydrogenase patD converts neopatulin to E-ascladiol. The steps between isoepoxydon and E-ascladiol occur in the cytosol, and E-ascladiol is probably secreted to the extracellular space by one of the cluster-specific transporters patC or patM. Finally, the secreted patulin synthase patE catalyzes the conversion of E-ascladiol to patulin. The chain is Cytochrome P450 monooxygenase patI from Aspergillus clavatus (strain ATCC 1007 / CBS 513.65 / DSM 816 / NCTC 3887 / NRRL 1 / QM 1276 / 107).